Consider the following 105-residue polypeptide: Cysteine-rich venom protein VAR2 (105 aa).

The N-terminal stretch at 1 to 22 is a signal peptide; that stretch reads MILLKLYLTLAAILCQSRGTTS.

Belongs to the CRISP family. Post-translationally, contains 8 disulfide bonds. As to expression, expressed by the venom gland.

The protein localises to the secreted. Blocks ryanodine receptors, and potassium channels. The sequence is that of Cysteine-rich venom protein VAR2 from Varanus acanthurus (Ridge-tailed monitor).